A 309-amino-acid chain; its full sequence is MLGAMEGVLLSVATSEALLGIVGNTFIALVNCMDCTRNKNLYNIGFILTGLAISRICLVWILITEAYIKIFSPQLLSPINIIELISYLWIITSQLNVWFATSLSIFYFLKIANFSHHIFLWLKRRINIVFAFLIGCLLMSWLFSFPVVVKMVKDKKMLYINSSWQIHMKKSELIINYVFTNGGVFLLFIIMLIVCFLLIISLWRHSKWMQSNESGFRDLNTEVHVKTIKVLLSFIILFILHLIGITINVICLLVPENNLLFVFGLTIAFLYPCCHSLILILANSRLKRCFVRILQQLMCSEEGKEFRNT.

Residues 1–7 lie on the Extracellular side of the membrane; that stretch reads MLGAMEG. The chain crosses the membrane as a helical span at residues 8 to 28; the sequence is VLLSVATSEALLGIVGNTFIA. Topologically, residues 29-43 are cytoplasmic; sequence LVNCMDCTRNKNLYN. A helical transmembrane segment spans residues 44-64; that stretch reads IGFILTGLAISRICLVWILIT. Topologically, residues 65–87 are extracellular; the sequence is EAYIKIFSPQLLSPINIIELISY. The chain crosses the membrane as a helical span at residues 88 to 108; that stretch reads LWIITSQLNVWFATSLSIFYF. The Cytoplasmic portion of the chain corresponds to 109 to 127; sequence LKIANFSHHIFLWLKRRIN. Residues 128–148 form a helical membrane-spanning segment; that stretch reads IVFAFLIGCLLMSWLFSFPVV. At 149-182 the chain is on the extracellular side; sequence VKMVKDKKMLYINSSWQIHMKKSELIINYVFTNG. The N-linked (GlcNAc...) asparagine glycan is linked to N161. The helical transmembrane segment at 183–203 threads the bilayer; sequence GVFLLFIIMLIVCFLLIISLW. Residues 204 to 233 are Cytoplasmic-facing; that stretch reads RHSKWMQSNESGFRDLNTEVHVKTIKVLLS. The helical transmembrane segment at 234–254 threads the bilayer; the sequence is FIILFILHLIGITINVICLLV. Residues 255–259 are Extracellular-facing; that stretch reads PENNL. The helical transmembrane segment at 260–280 threads the bilayer; that stretch reads LFVFGLTIAFLYPCCHSLILI. Residues 281-309 lie on the Cytoplasmic side of the membrane; it reads LANSRLKRCFVRILQQLMCSEEGKEFRNT.

This sequence belongs to the G-protein coupled receptor T2R family.

The protein localises to the membrane. In terms of biological role, putative taste receptor which may play a role in the perception of bitterness. This chain is Taste receptor type 2 member 114, found in Rattus norvegicus (Rat).